The following is a 397-amino-acid chain: Serpin B10 (397 aa).

The tract at residues 62–85 (RDQGVKSSPESEKKRKMEFNSSNS) is disordered. Basic and acidic residues predominate over residues 70–79 (PESEKKRKME). The Nuclear localization signal signature appears at 74-77 (KKRK).

This sequence belongs to the serpin family. Ov-serpin subfamily.

It is found in the nucleus. The protein localises to the cytoplasm. In terms of biological role, protease inhibitor that may play a role in the regulation of protease activities during hematopoiesis and apoptosis induced by TNF. May regulate protease activities in the cytoplasm and in the nucleus. The polypeptide is Serpin B10 (SERPINB10) (Papio anubis (Olive baboon)).